The sequence spans 379 residues: MNEFLPFSRPAMGPEELAAVSEVLQSGWITTGPKNQALEQAFCALTGNQHSIAVSSATAGMHVALMALGIQAGDEVITPSLTWVSTLNMIVLLGAEPVMIDVDHDTLMVTPQAIEAAITPRTKAIIPVHYAGAPVDIDAIRAVADRHGIPVIEDAAHAAGTYYKGSHVGNRGTAIFSFHAIKNMTCAEGGLIVTDDEQLANRMRSLKFHGLGVDAFDRQTLGRAPQAEVISPGYKYNLADINAAIALVQLKKLEKNNARRTEIAERYLTELANTPFLPLSQPAWAHKHAWHLFIVRVDEATCGISRNGLMDDLKAKGIGTGLHFRAAHTQKYYRERYPALVLPNTEWNSDRICSIPLFPTMTDDDVTRVIAALRDVAGY.

Lys-182 is modified (N6-(pyridoxal phosphate)lysine).

This sequence belongs to the DegT/DnrJ/EryC1 family. ArnB subfamily. Homodimer. Pyridoxal 5'-phosphate is required as a cofactor.

The enzyme catalyses UDP-4-amino-4-deoxy-beta-L-arabinose + 2-oxoglutarate = UDP-beta-L-threo-pentopyranos-4-ulose + L-glutamate. The protein operates within nucleotide-sugar biosynthesis; UDP-4-deoxy-4-formamido-beta-L-arabinose biosynthesis; UDP-4-deoxy-4-formamido-beta-L-arabinose from UDP-alpha-D-glucuronate: step 2/3. It participates in bacterial outer membrane biogenesis; lipopolysaccharide biosynthesis. Functionally, catalyzes the conversion of UDP-4-keto-arabinose (UDP-Ara4O) to UDP-4-amino-4-deoxy-L-arabinose (UDP-L-Ara4N). The modified arabinose is attached to lipid A and is required for resistance to polymyxin and cationic antimicrobial peptides. This is UDP-4-amino-4-deoxy-L-arabinose--oxoglutarate aminotransferase from Enterobacter sp. (strain 638).